A 208-amino-acid chain; its full sequence is ATP-dependent Clp protease proteolytic subunit (208 aa).

The Nucleophile role is filled by Ser-105. Residue His-130 is part of the active site.

Belongs to the peptidase S14 family. In terms of assembly, fourteen ClpP subunits assemble into 2 heptameric rings which stack back to back to give a disk-like structure with a central cavity, resembling the structure of eukaryotic proteasomes.

It is found in the cytoplasm. It carries out the reaction Hydrolysis of proteins to small peptides in the presence of ATP and magnesium. alpha-casein is the usual test substrate. In the absence of ATP, only oligopeptides shorter than five residues are hydrolyzed (such as succinyl-Leu-Tyr-|-NHMec, and Leu-Tyr-Leu-|-Tyr-Trp, in which cleavage of the -Tyr-|-Leu- and -Tyr-|-Trp bonds also occurs).. Its function is as follows. Cleaves peptides in various proteins in a process that requires ATP hydrolysis. Has a chymotrypsin-like activity. Plays a major role in the degradation of misfolded proteins. This chain is ATP-dependent Clp protease proteolytic subunit, found in Xylella fastidiosa (strain M23).